Consider the following 430-residue polypeptide: RNA-binding protein 34 (430 aa).

Disordered regions lie at residues 1–55 (MALE…GTGR), 72–123 (VPVP…ADRE), and 134–153 (EIHQ…VKVA). 3 positions are modified to phosphoserine: serine 14, serine 28, and serine 99. A compositionally biased stretch (basic and acidic residues) spans 23 to 34 (DGVRGSPPEDYR). Positions 113-123 (TNAEKKLADRE) are enriched in basic and acidic residues. The residue at position 151 (lysine 151) is an N6-acetyllysine. RRM domains lie at 185–280 (RTVF…LASE) and 287–364 (RSVF…RSVN). Lysine 242 is covalently cross-linked (Glycyl lysine isopeptide (Lys-Gly) (interchain with G-Cter in SUMO2)). Serine 288 is modified (phosphoserine). Disordered regions lie at residues 365–395 (KEKF…KTAE) and 411–430 (KTKK…RKQK).

This sequence belongs to the RRM RBM34 family.

It localises to the nucleus. The protein localises to the nucleolus. The sequence is that of RNA-binding protein 34 (RBM34) from Homo sapiens (Human).